Here is a 719-residue protein sequence, read N- to C-terminus: Anaphase-promoting complex subunit 4 (719 aa).

The stretch at 57-96 (NSQRIWDVDFHDLEATELCWNHDGNLIVVGFKNGELKIID) is one WD repeat.

The APC/C is composed of at least 13 subunits: apc1, apc2, nuc2, apc4, apc5, cut9, apc8, apc10, apc11, hcn1, apc13, apc14 and apc15. Interacts with apc1 and dim1.

In terms of biological role, component of the anaphase-promoting complex/cyclosome (APC/C), a cell cycle-regulated E3 ubiquitin-protein ligase complex that controls progression through mitosis and the G1 phase of the cell cycle. The APC/C is thought to confer substrate specificity and, in the presence of ubiquitin-conjugating E2 enzymes, it catalyzes the formation of protein-ubiquitin conjugates that are subsequently degraded by the 26S proteasome. Has a role in promoting metaphase to anaphase transition via the ubiquitination of specific mitotic substrates. The sequence is that of Anaphase-promoting complex subunit 4 (cut20) from Schizosaccharomyces pombe (strain 972 / ATCC 24843) (Fission yeast).